Here is a 412-residue protein sequence, read N- to C-terminus: Delta-aminolevulinic acid dehydratase, chloroplastic (412 aa).

Residues 1-48 (MASSIPNAPSAFNSQSYVGLRAPLRTFNFSSPQAAKIPRSQRLFVVRA) constitute a chloroplast transit peptide. The interval 68-101 (VRPRPAAPVGTPVVPSLPLHRRPRRNRKSPALRS) is disordered. Residues 86 to 97 (LHRRPRRNRKSP) show a composition bias toward basic residues. The active-site Schiff-base intermediate with substrate is Lys-280. Residues Arg-290 and Lys-302 each coordinate 5-aminolevulinate. Residue Glu-318 coordinates Mg(2+). The Schiff-base intermediate with substrate role is filled by Lys-333. Residues Ser-359 and Tyr-398 each contribute to the 5-aminolevulinate site.

It belongs to the ALAD family. In terms of assembly, homooctamer. Requires Mg(2+) as cofactor. As to expression, leaves and root nodules.

The protein resides in the plastid. The protein localises to the chloroplast. The enzyme catalyses 2 5-aminolevulinate = porphobilinogen + 2 H2O + H(+). It functions in the pathway porphyrin-containing compound metabolism; protoporphyrin-IX biosynthesis; coproporphyrinogen-III from 5-aminolevulinate: step 1/4. In terms of biological role, is committed to plant tetrapyrrole synthesis. Its function is as follows. Catalyzes an early step in the biosynthesis of tetrapyrroles. Binds two molecules of 5-aminolevulinate per subunit, each at a distinct site, and catalyzes their condensation to form porphobilinogen. This chain is Delta-aminolevulinic acid dehydratase, chloroplastic (HEMB), found in Glycine max (Soybean).